Consider the following 257-residue polypeptide: Putative hydro-lyase Bcen2424_3550 (257 aa).

It belongs to the D-glutamate cyclase family.

The sequence is that of Putative hydro-lyase Bcen2424_3550 from Burkholderia cenocepacia (strain HI2424).